Reading from the N-terminus, the 397-residue chain is Xyloglucan O-acetyltransferase 3 (397 aa).

Residues 1–3 (MNR) are Cytoplasmic-facing. Residues 4–24 (FFYTVGLIFLFSFFILYSPKT) traverse the membrane as a helical; Signal-anchor for type II membrane protein segment. Residues 25 to 397 (SDLSNNVDLH…RHAFTDFTWS (373 aa)) are Lumenal-facing. 4 cysteine pairs are disulfide-bonded: Cys48–Cys98, Cys69–Cys134, Cys78–Cys370, and Cys293–Cys366. Asn66 is a glycosylation site (N-linked (GlcNAc...) asparagine). The GDS motif motif lies at 121-123 (GDS). The Nucleophile role is filled by Ser123. Asn162, Asn182, and Asn294 each carry an N-linked (GlcNAc...) asparagine glycan. Asp365 (proton donor) is an active-site residue. Residues 365–368 (DCVH) carry the DXXH motif motif. The active-site Proton acceptor is His368.

Belongs to the PC-esterase family. TBL subfamily.

Its subcellular location is the golgi apparatus membrane. Xyloglucan acetyltransferase that catalyzes the acetylation of fucosylated Gal residues on xyloglucan side chains. Predominantly catalyze 6-O-monoacetylation of Gal residues in the Fuc-Gal-Xyl trisaccharide side chains of xyloglucan oligomers. The sequence is that of Xyloglucan O-acetyltransferase 3 from Populus trichocarpa (Western balsam poplar).